The sequence spans 834 residues: DNA gyrase subunit A (834 aa).

The Topo IIA-type catalytic domain occupies 34–500 (LPDIRDGLKP…ADDIRDIEDI (467 aa)). Tyrosine 122 serves as the catalytic O-(5'-phospho-DNA)-tyrosine intermediate. The GyrA-box signature appears at 527 to 533 (QRRGGHG). Residues 810-834 (LSSNENDDEVLSGSEEECSDTVSLR) are disordered. A compositionally biased stretch (acidic residues) spans 814–828 (ENDDEVLSGSEEECS).

This sequence belongs to the type II topoisomerase GyrA/ParC subunit family. As to quaternary structure, heterotetramer, composed of two GyrA and two GyrB chains. In the heterotetramer, GyrA contains the active site tyrosine that forms a transient covalent intermediate with DNA, while GyrB binds cofactors and catalyzes ATP hydrolysis.

The protein resides in the cytoplasm. The catalysed reaction is ATP-dependent breakage, passage and rejoining of double-stranded DNA.. Its function is as follows. A type II topoisomerase that negatively supercoils closed circular double-stranded (ds) DNA in an ATP-dependent manner to modulate DNA topology and maintain chromosomes in an underwound state. Negative supercoiling favors strand separation, and DNA replication, transcription, recombination and repair, all of which involve strand separation. Also able to catalyze the interconversion of other topological isomers of dsDNA rings, including catenanes and knotted rings. Type II topoisomerases break and join 2 DNA strands simultaneously in an ATP-dependent manner. In Chlamydia pneumoniae (Chlamydophila pneumoniae), this protein is DNA gyrase subunit A.